Reading from the N-terminus, the 113-residue chain is Hydrogenase maturation factor HypA 2 (113 aa).

Position 2 (His-2) interacts with Ni(2+). The Zn(2+) site is built by Cys-73, Cys-76, Cys-89, and Cys-92.

It belongs to the HypA/HybF family.

In terms of biological role, involved in the maturation of [NiFe] hydrogenases. Required for nickel insertion into the metal center of the hydrogenase. The sequence is that of Hydrogenase maturation factor HypA 2 from Bradyrhizobium diazoefficiens (strain JCM 10833 / BCRC 13528 / IAM 13628 / NBRC 14792 / USDA 110).